Here is an 845-residue protein sequence, read N- to C-terminus: U-box domain-containing protein 52 (845 aa).

Disordered regions lie at residues 180–210 (RPSESDASGSIRFERSSSTSGSTDSPRLPPE) and 229–258 (SPALKHSMGSNAVAQMDTSSSGTDQEEVST). A compositionally biased stretch (low complexity) spans 187–204 (SGSIRFERSSSTSGSTDS). Residues 236–251 (MGSNAVAQMDTSSSGT) show a composition bias toward polar residues. A coiled-coil region spans residues 351 to 468 (SITDNQVNLN…REKDKLQASL (118 aa)). Residues 490–754 (FAENLKIGIG…DLKDQIIPAL (265 aa)) enclose the Protein kinase domain. ATP-binding positions include 496–504 (IGIGAYGSV) and Lys-517. The active-site Proton acceptor is Asp-612. Residues 774–845 (GPPSHFICPL…AIMEWKSNKR (72 aa)) form the U-box domain.

It belongs to the protein kinase superfamily. Ser/Thr protein kinase family.

The enzyme catalyses L-seryl-[protein] + ATP = O-phospho-L-seryl-[protein] + ADP + H(+). It carries out the reaction L-threonyl-[protein] + ATP = O-phospho-L-threonyl-[protein] + ADP + H(+). The catalysed reaction is S-ubiquitinyl-[E2 ubiquitin-conjugating enzyme]-L-cysteine + [acceptor protein]-L-lysine = [E2 ubiquitin-conjugating enzyme]-L-cysteine + N(6)-ubiquitinyl-[acceptor protein]-L-lysine.. It participates in protein modification; protein ubiquitination. In terms of biological role, functions as an E3 ubiquitin ligase. This chain is U-box domain-containing protein 52 (PUB52), found in Arabidopsis thaliana (Mouse-ear cress).